Here is a 397-residue protein sequence, read N- to C-terminus: Elongation factor Tu (397 aa).

The tr-type G domain maps to 10–207 (LPHVNVGTIG…TLDAYIPEPV (198 aa)). The interval 19–26 (GHVDHGKT) is G1. Residue 19–26 (GHVDHGKT) coordinates GTP. T26 provides a ligand contact to Mg(2+). Residues 60–64 (GITIN) are G2. Positions 81–84 (DCPG) are G3. GTP-binding positions include 81-85 (DCPGH) and 136-139 (NKAD). Residues 136-139 (NKAD) are G4. The G5 stretch occupies residues 174-176 (SAR).

Belongs to the TRAFAC class translation factor GTPase superfamily. Classic translation factor GTPase family. EF-Tu/EF-1A subfamily. In terms of assembly, monomer.

The protein resides in the cytoplasm. It carries out the reaction GTP + H2O = GDP + phosphate + H(+). GTP hydrolase that promotes the GTP-dependent binding of aminoacyl-tRNA to the A-site of ribosomes during protein biosynthesis. This is Elongation factor Tu from Pseudomonas entomophila (strain L48).